A 285-amino-acid polypeptide reads, in one-letter code: HTH-type transcriptional regulator MurR (285 aa).

The 77-residue stretch at Met1 to Ser77 folds into the HTH rpiR-type domain. Positions Ser37–Gln56 form a DNA-binding region, H-T-H motif. The SIS domain maps to Ile128 to Val268.

Homotetramer.

It functions in the pathway amino-sugar metabolism; N-acetylmuramate degradation [regulation]. Functionally, represses the expression of the murPQ operon involved in the uptake and degradation of N-acetylmuramic acid (MurNAc). Binds to two adjacent inverted repeats within the operator region. MurNAc 6-phosphate, the substrate of MurQ, is the specific inducer that weakens binding of MurR to the operator. The polypeptide is HTH-type transcriptional regulator MurR (Shigella sonnei (strain Ss046)).